The primary structure comprises 262 residues: Hydroxyethylthiazole kinase (262 aa).

Residue methionine 50 coordinates substrate. 2 residues coordinate ATP: arginine 125 and threonine 171. A substrate-binding site is contributed by glycine 198.

It belongs to the Thz kinase family. Requires Mg(2+) as cofactor.

It catalyses the reaction 5-(2-hydroxyethyl)-4-methylthiazole + ATP = 4-methyl-5-(2-phosphooxyethyl)-thiazole + ADP + H(+). It participates in cofactor biosynthesis; thiamine diphosphate biosynthesis; 4-methyl-5-(2-phosphoethyl)-thiazole from 5-(2-hydroxyethyl)-4-methylthiazole: step 1/1. In terms of biological role, catalyzes the phosphorylation of the hydroxyl group of 4-methyl-5-beta-hydroxyethylthiazole (THZ). This chain is Hydroxyethylthiazole kinase, found in Escherichia coli O6:H1 (strain CFT073 / ATCC 700928 / UPEC).